A 183-amino-acid polypeptide reads, in one-letter code: Dual-action ribosomal maturation protein DarP (183 aa).

Belongs to the DarP family.

Its subcellular location is the cytoplasm. Its function is as follows. Member of a network of 50S ribosomal subunit biogenesis factors which assembles along the 30S-50S interface, preventing incorrect 23S rRNA structures from forming. Promotes peptidyl transferase center (PTC) maturation. This Escherichia coli O7:K1 (strain IAI39 / ExPEC) protein is Dual-action ribosomal maturation protein DarP.